The primary structure comprises 459 residues: E3 ubiquitin-protein ligase RNF14 (459 aa).

The RWD domain occupies 10–129 (DELLALASIY…QFLKEETLDF (120 aa)). Residues 141–169 (SGSQPQCEPAQKHAADASGEKSKVQDLDP) are disordered. A compositionally biased stretch (basic and acidic residues) spans 150–169 (AQKHAADASGEKSKVQDLDP). The TRIAD supradomain stretch occupies residues 200–441 (KAFCCGICYS…NPDSPCYNQL (242 aa)). Zn(2+) is bound by residues Cys204, Cys207, Cys222, His224, Cys227, Cys230, Cys249, Cys254, Cys293, Cys298, Cys313, Cys316, Cys321, Cys324, His329, Cys334, Cys388, and Cys391. 2 RING-type zinc fingers span residues 204-249 (CGIC…CLNC) and 204-254 (CGIC…EPKC). Residues 273–334 (ARYDRLLLQS…RRSYHGLSHC (62 aa)) form an IBR-type zinc finger. The segment at 388–417 (CPCCGTNIQKAHGCNKMTCSSCQKYFCWIC) adopts an RING-type 2; atypical zinc-finger fold. Cys401 is an active-site residue. Zn(2+) contacts are provided by Cys406, Cys409, Cys414, Cys417, His429, and Cys437.

It belongs to the RBR family. RNF14 subfamily.

It is found in the cytoplasm. The protein resides in the nucleus. It catalyses the reaction [E2 ubiquitin-conjugating enzyme]-S-ubiquitinyl-L-cysteine + [acceptor protein]-L-lysine = [E2 ubiquitin-conjugating enzyme]-L-cysteine + [acceptor protein]-N(6)-ubiquitinyl-L-lysine.. It functions in the pathway protein modification; protein ubiquitination. E3 ubiquitin-protein ligase that plays a key role in the RNF14-RNF25 translation quality control pathway, a pathway that takes place when a ribosome has stalled during translation, and which promotes ubiquitination and degradation of translation factors on stalled ribosomes. Recruited to stalled ribosomes by the ribosome collision sensor GCN1 and mediates 'Lys-6'-linked ubiquitination of target proteins, leading to their degradation. Mediates ubiquitination of eef1a1/eEF1A and etf1/eRF1 translation factors on stalled ribosomes, leading to their degradation. Specifically required to resolve RNA-protein cross-links caused by reactive aldehydes, which trigger translation stress by stalling ribosomes: acts by catalying 'Lys-6'-linked ubiquitination of RNA-protein cross-links, leading to their removal by the ATP-dependent unfoldase VCP and subsequent degradation by the proteasome. Independently of its function in the response to stalled ribosomes, acts as a regulator of transcription in Wnt signaling via its interaction with TCF transcription factors (tcf7/tcf1, tcf7l1/tcf3 and tcf7l2/tcf4). This Danio rerio (Zebrafish) protein is E3 ubiquitin-protein ligase RNF14.